Consider the following 183-residue polypeptide: Oligoribonuclease (183 aa).

The region spanning 10-173 (LIWIDLEMTG…ADIRESIAEL (164 aa)) is the Exonuclease domain. The active site involves tyrosine 131.

This sequence belongs to the oligoribonuclease family.

It is found in the cytoplasm. Its function is as follows. 3'-to-5' exoribonuclease specific for small oligoribonucleotides. This Idiomarina loihiensis (strain ATCC BAA-735 / DSM 15497 / L2-TR) protein is Oligoribonuclease.